We begin with the raw amino-acid sequence, 919 residues long: Isoleucine--tRNA ligase (919 aa).

The 'HIGH' region motif lies at 57-67; the sequence is PYANGHIHIGT. An L-isoleucyl-5'-AMP-binding site is contributed by E553. The short motif at 594 to 598 is the 'KMSKS' region element; the sequence is KMSKS. Residue K597 participates in ATP binding. 4 residues coordinate Zn(2+): C887, C890, C907, and C910.

It belongs to the class-I aminoacyl-tRNA synthetase family. IleS type 1 subfamily. Monomer. The cofactor is Zn(2+).

Its subcellular location is the cytoplasm. It carries out the reaction tRNA(Ile) + L-isoleucine + ATP = L-isoleucyl-tRNA(Ile) + AMP + diphosphate. Its function is as follows. Catalyzes the attachment of isoleucine to tRNA(Ile). As IleRS can inadvertently accommodate and process structurally similar amino acids such as valine, to avoid such errors it has two additional distinct tRNA(Ile)-dependent editing activities. One activity is designated as 'pretransfer' editing and involves the hydrolysis of activated Val-AMP. The other activity is designated 'posttransfer' editing and involves deacylation of mischarged Val-tRNA(Ile). The chain is Isoleucine--tRNA ligase from Thermotoga maritima (strain ATCC 43589 / DSM 3109 / JCM 10099 / NBRC 100826 / MSB8).